A 398-amino-acid polypeptide reads, in one-letter code: Na(+)/H(+) antiporter NhaA (398 aa).

Helical transmembrane passes span 21–41 (AGGIILMVAAALALIVANSPL), 56–76 (LSVSHWVNDGLMAVFFLLVGL), 94–114 (VLPGIAAAGGMLVPALVYVFI), 124–144 (GWAIPTATDIAFALGVLSLLG), 153–173 (VFLTALAIIDDLGAVIIIAIF), 176–196 (SGLSLAYLGAAFAVIAALVVL), 201–221 (VMTLLPYLVLGAILWVLVLKS), 263–283 (IVPFFVIPIFGFANAGVSLAG), 284–304 (LSLGALIEPLTLGVAAGLVVG), 306–326 (LVGVFGSSALAIRLGLADLPA), 333–353 (MIGISLLCGIGFTMSLFIGLL), and 367–387 (VGILAGSFVAAILGAAVLLMA).

It belongs to the NhaA Na(+)/H(+) (TC 2.A.33) antiporter family.

It is found in the cell inner membrane. It catalyses the reaction Na(+)(in) + 2 H(+)(out) = Na(+)(out) + 2 H(+)(in). Its function is as follows. Na(+)/H(+) antiporter that extrudes sodium in exchange for external protons. This Mesorhizobium japonicum (strain LMG 29417 / CECT 9101 / MAFF 303099) (Mesorhizobium loti (strain MAFF 303099)) protein is Na(+)/H(+) antiporter NhaA.